A 369-amino-acid chain; its full sequence is MGLRKKSTKNPPVLSQEFILQNHADIVSCVGMFFLLGLVFEGTAEASIVFLTLQHSVAVPAAEEQATGSKSLYYYGVKDLATVFFYMLVAIIIHATIQEYVLDKINKRMQFTKAKQNKFNESGQFSVFYFFSCIWGTFILISENCLSDPTLIWKARPHSMMTFQMKFFYISQLAYWFHAFPELYFQKTKKQDIPRQLVYIGLHLFHITGAYLLYLNHLGLLLLVLHYFVELLSHMCGLFYFSDEKYQKGISLWAIVFILGRLVTLIVSVLTVGFHLAGSQNRNPDALTGNVNVLAAKIAVLSSSCTIQAYVTWNLITLWLQRWVEDSNIQASCMKKKRSRSSKKRTENGVGVETSNRVDCPPKRKEKSS.

The Cytoplasmic segment spans residues 1–29 (MGLRKKSTKNPPVLSQEFILQNHADIVSC). A helical transmembrane segment spans residues 30-50 (VGMFFLLGLVFEGTAEASIVF). Residues 51–81 (LTLQHSVAVPAAEEQATGSKSLYYYGVKDLA) lie on the Lumenal side of the membrane. The helical transmembrane segment at 82–102 (TVFFYMLVAIIIHATIQEYVL) threads the bilayer. At 103 to 121 (DKINKRMQFTKAKQNKFNE) the chain is on the cytoplasmic side. Positions 117–326 (NKFNESGQFS…TLWLQRWVED (210 aa)) constitute a TLC domain. A helical membrane pass occupies residues 122–142 (SGQFSVFYFFSCIWGTFILIS). At 143–164 (ENCLSDPTLIWKARPHSMMTFQ) the chain is on the lumenal side. The helical transmembrane segment at 165-185 (MKFFYISQLAYWFHAFPELYF) threads the bilayer. Topologically, residues 186–196 (QKTKKQDIPRQ) are cytoplasmic. The helical transmembrane segment at 197 to 215 (LVYIGLHLFHITGAYLLYL) threads the bilayer. Residues 216–219 (NHLG) are Lumenal-facing. Residues 220–242 (LLLLVLHYFVELLSHMCGLFYFS) form a helical membrane-spanning segment. Topologically, residues 243 to 249 (DEKYQKG) are cytoplasmic. The helical transmembrane segment at 250 to 270 (ISLWAIVFILGRLVTLIVSVL) threads the bilayer. Over 271–297 (TVGFHLAGSQNRNPDALTGNVNVLAAK) the chain is Lumenal. The helical transmembrane segment at 298–318 (IAVLSSSCTIQAYVTWNLITL) threads the bilayer. Over 319 to 369 (WLQRWVEDSNIQASCMKKKRSRSSKKRTENGVGVETSNRVDCPPKRKEKSS) the chain is Cytoplasmic. A disordered region spans residues 335-369 (KKKRSRSSKKRTENGVGVETSNRVDCPPKRKEKSS). Positions 360-369 (CPPKRKEKSS) are enriched in basic and acidic residues.

This sequence belongs to the TRAM family.

The protein localises to the endoplasmic reticulum membrane. In terms of biological role, stimulatory or required for the translocation of secretory proteins across the ER membrane. This Homo sapiens (Human) protein is Translocating chain-associated membrane protein 1-like 1 (TRAM1L1).